A 388-amino-acid polypeptide reads, in one-letter code: Fetuin-B (388 aa).

Residues 1-18 form the signal peptide; sequence MGLLRLLVLCTLAACCMA. Cystatin fetuin-B-type domains lie at 28-141 and 152-264; these read QRPL…YNCT and TTCP…VTCE. Asn40 is a glycosylation site (N-linked (GlcNAc...) asparagine). Disulfide bonds link Cys96–Cys107, Cys120–Cys140, Cys154–Cys157, Cys217–Cys224, and Cys237–Cys263. Asn139 carries N-linked (GlcNAc...) asparagine glycosylation. 2 disordered regions span residues 270–343 and 367–388; these read AQVP…PQGD and KEQRSAECPGPEKENNPLVLPP. Positions 279-300 are enriched in polar residues; it reads AVTQGPQKLPQKNTAPTSSPSV. 2 O-linked (GalNAc...) threonine glycosylation sites follow: Thr292 and Thr295. Phosphoserine is present on Ser321. Basic and acidic residues predominate over residues 367-381; it reads KEQRSAECPGPEKEN.

Belongs to the fetuin family. As to expression, liver, lung and tongue.

The protein resides in the secreted. Functionally, protease inhibitor required for egg fertilization. Required to prevent premature zona pellucida hardening before fertilization, probably by inhibiting the protease activity of ASTL, a protease that mediates the cleavage of ZP2 and triggers zona pellucida hardening. The sequence is that of Fetuin-B (Fetub) from Mus musculus (Mouse).